The following is a 98-amino-acid chain: Alpha-elicitin DRE-alpha (98 aa).

Cystine bridges form between Cys-3-Cys-71, Cys-27-Cys-56, and Cys-51-Cys-95.

Belongs to the elicitin family.

The protein localises to the secreted. Functionally, induces local and distal defense responses (incompatible hypersensitive reaction) in plants from the solanaceae and cruciferae families. Elicits leaf necrosis and causes the accumulation of pathogenesis-related proteins. Might interact with the lipidic molecules of the plasma membrane. This Phytophthora drechsleri protein is Alpha-elicitin DRE-alpha.